An 852-amino-acid chain; its full sequence is Tiger protein I3 (852 aa).

The N-terminal stretch at 1–18 is a signal peptide; sequence MKILLFFILFYLFSFSIS. The Extracellular segment spans residues 19–830; it reads YDEVIPLGYE…DVHQYSDARN (812 aa). N-linked (GlcNAc...) asparagine glycosylation is found at Asn-31, Asn-47, Asn-67, Asn-97, Asn-129, Asn-201, Asn-215, Asn-228, Asn-260, Asn-323, Asn-352, Asn-356, Asn-404, Asn-441, Asn-476, Asn-483, Asn-501, Asn-512, Asn-574, Asn-592, Asn-635, Asn-658, Asn-661, Asn-679, Asn-680, Asn-723, Asn-757, Asn-761, Asn-773, Asn-785, and Asn-800. An IPT/TIG domain is found at 290 to 367; sequence IPSIVNSIPK…SSPIAVSIND (78 aa). The helical transmembrane segment at 831 to 851 threads the bilayer; that stretch reads IFQNLLLSILIIIIISLFISN. Ile-852 is a topological domain (cytoplasmic).

Its subcellular location is the membrane. The chain is Tiger protein I3 (tgrI3) from Dictyostelium discoideum (Social amoeba).